The chain runs to 105 residues: Large ribosomal subunit protein uL24 (105 aa).

The protein belongs to the universal ribosomal protein uL24 family. Part of the 50S ribosomal subunit.

Its function is as follows. One of two assembly initiator proteins, it binds directly to the 5'-end of the 23S rRNA, where it nucleates assembly of the 50S subunit. In terms of biological role, one of the proteins that surrounds the polypeptide exit tunnel on the outside of the subunit. This chain is Large ribosomal subunit protein uL24, found in Pseudothermotoga lettingae (strain ATCC BAA-301 / DSM 14385 / NBRC 107922 / TMO) (Thermotoga lettingae).